Here is a 199-residue protein sequence, read N- to C-terminus: MHKHYHQAKFLLSCPSLKGCPPDEGYEVIFAGRSNAGKSSVINTLTLQNKLAKVSRTPGKTQHFVFFELDKDRRLVDLPGYGYAKVPKRVKTKWHKDINEYFNKRDCLRGTVLVMDIRHPFKLFDQMVLNWCHSINLSTQIILTKSDKLKKGAASNTYLKVHNQIKKYPYVDVQLFSSLKKQGLEILGARLNTFFGYVD.

The EngB-type G domain maps to 24–197 (EGYEVIFAGR…GARLNTFFGY (174 aa)). Residues 32 to 39 (GRSNAGKS), 59 to 63 (GKTQH), 77 to 80 (DLPG), 144 to 147 (TKSD), and 176 to 178 (FSS) contribute to the GTP site. Ser-39 and Thr-61 together coordinate Mg(2+).

This sequence belongs to the TRAFAC class TrmE-Era-EngA-EngB-Septin-like GTPase superfamily. EngB GTPase family. Requires Mg(2+) as cofactor.

Its function is as follows. Necessary for normal cell division and for the maintenance of normal septation. This Ruthia magnifica subsp. Calyptogena magnifica protein is Probable GTP-binding protein EngB.